Reading from the N-terminus, the 162-residue chain is Peptide deformylase (162 aa).

Fe cation-binding residues include C86 and H128. The active site involves E129. Fe cation is bound at residue H132.

The protein belongs to the polypeptide deformylase family. It depends on Fe(2+) as a cofactor.

It catalyses the reaction N-terminal N-formyl-L-methionyl-[peptide] + H2O = N-terminal L-methionyl-[peptide] + formate. Functionally, removes the formyl group from the N-terminal Met of newly synthesized proteins. Requires at least a dipeptide for an efficient rate of reaction. N-terminal L-methionine is a prerequisite for activity but the enzyme has broad specificity at other positions. The protein is Peptide deformylase of Treponema pallidum (strain Nichols).